We begin with the raw amino-acid sequence, 159 residues long: Phosphopantetheine adenylyltransferase (159 aa).

T10 contacts substrate. ATP contacts are provided by residues 10-11 (TF) and H18. Residues K42, L74, and R88 each coordinate substrate. ATP is bound by residues 89–91 (GLR), E99, and 124–130 (NSFISST).

It belongs to the bacterial CoaD family. In terms of assembly, homohexamer. Requires Mg(2+) as cofactor.

It localises to the cytoplasm. It catalyses the reaction (R)-4'-phosphopantetheine + ATP + H(+) = 3'-dephospho-CoA + diphosphate. Its pathway is cofactor biosynthesis; coenzyme A biosynthesis; CoA from (R)-pantothenate: step 4/5. Reversibly transfers an adenylyl group from ATP to 4'-phosphopantetheine, yielding dephospho-CoA (dPCoA) and pyrophosphate. This Shewanella halifaxensis (strain HAW-EB4) protein is Phosphopantetheine adenylyltransferase.